A 162-amino-acid polypeptide reads, in one-letter code: UPF0114 protein Psyr_4257 (162 aa).

4 helical membrane passes run 15–35, 53–73, 109–129, and 136–156; these read LLAPIYFGLSLGLLALCLKFF, LILVLLSLIDMALVGGLLVMV, VAASIVAISSIHLLRVFMDAT, and LMWYVIIHMTFVISAFAMGYL.

Belongs to the UPF0114 family.

It localises to the cell membrane. The sequence is that of UPF0114 protein Psyr_4257 from Pseudomonas syringae pv. syringae (strain B728a).